We begin with the raw amino-acid sequence, 381 residues long: Arf-GAP with dual PH domain-containing protein 2 (381 aa).

One can recognise an Arf-GAP domain in the interval 9–132; that stretch reads KRLLELLQAA…TAIDKAVSHP (124 aa). The C4-type zinc finger occupies 25-48; that stretch reads CADCGAADPDWASYKLGIFICLHC. 2 PH domains span residues 132 to 233 and 255 to 361; these read PGNR…AARL and NYLK…GVLS.

It is found in the cytoplasm. The protein localises to the cell membrane. Its function is as follows. GTPase-activating protein for the ADP ribosylation factor family (Potential). Binds phosphatidylinositol 3,4,5-trisphosphate (PtdInsP3) and inositol 1,3,4,5-tetrakisphosphate (InsP4). Possesses a stoichiometry of two binding sites for InsP4 with identical affinity. The chain is Arf-GAP with dual PH domain-containing protein 2 (Adap2) from Mus musculus (Mouse).